A 186-amino-acid chain; its full sequence is MTVRDVIQKIEPRMKKTIEAFQHEIASIRTGKATTALLDRVKVEAYGSQMPLKQVGNVGVLDVHTLSVQVWDKSMVGAVERAIRDANLGLNPSADGQTVRISIPPLTEERRKEYVKLTKKFGEDSKVSLRNHRRDLIHELDKLEKEKAISEDDKNHGKKEADDLVHKYEKKITEMIAQKEKEIMEV.

Belongs to the RRF family.

The protein localises to the cytoplasm. In terms of biological role, responsible for the release of ribosomes from messenger RNA at the termination of protein biosynthesis. May increase the efficiency of translation by recycling ribosomes from one round of translation to another. The chain is Ribosome-recycling factor from Chlorobaculum parvum (strain DSM 263 / NCIMB 8327) (Chlorobium vibrioforme subsp. thiosulfatophilum).